Reading from the N-terminus, the 1002-residue chain is ATP-dependent DNA helicase MPH1 (1002 aa).

In terms of domain architecture, Helicase ATP-binding spans 108-275; that stretch reads IVRCALFENV…EVVNNLHISK (168 aa). ATP is bound at residue 121-128; sequence IPTGTGKT. The DEAH box signature appears at 223 to 226; it reads DEAH. One can recognise a Helicase C-terminal domain in the interval 506 to 669; that stretch reads DEETYIRKNK…ALEYTKSDRI (164 aa). Basic and acidic residues predominate over residues 531–551; sequence ENRVEEEKKRQKEQAKLERTG. Disordered stretches follow at residues 531–569 and 799–843; these read ENRVEEEKKRQKEQAKLERTGRRTGSSEEAQLSGMNQKQ and AKSQ…DSHT. A compositionally biased stretch (polar residues) spans 553–568; that stretch reads RTGSSEEAQLSGMNQK.

This sequence belongs to the DEAD box helicase family. DEAH subfamily. FANCM sub-subfamily. In terms of assembly, interacts with the MHF histone-fold complex to form the FANCM-MHF complex.

It localises to the nucleus. It carries out the reaction ATP + H2O = ADP + phosphate + H(+). ATP-dependent DNA helicase involved in DNA damage repair by homologous recombination and in genome maintenance. Capable of unwinding D-loops. Plays a role in limiting crossover recombinants during mitotic DNA double-strand break (DSB) repair. Component of a FANCM-MHF complex which promotes gene conversion at blocked replication forks, probably by reversal of the stalled fork. This chain is ATP-dependent DNA helicase MPH1, found in Kluyveromyces lactis (strain ATCC 8585 / CBS 2359 / DSM 70799 / NBRC 1267 / NRRL Y-1140 / WM37) (Yeast).